Here is a 710-residue protein sequence, read N- to C-terminus: Polyribonucleotide nucleotidyltransferase (710 aa).

Positions 489 and 495 each coordinate Mg(2+). The KH domain maps to 556-615; that stretch reads PKIDTIKIDVDKIKVVIGKGGETIDKIIAETGVKIDIDDEGNVSIYSSDQAAIDRTKEII. The S1 motif domain occupies 625–693; it reads GEVYHAKVVR…EKGRVDASMK (69 aa). Positions 691-710 are disordered; it reads SMKALIPRPPKPEKKEEKHD. Positions 700–710 are enriched in basic and acidic residues; the sequence is PKPEKKEEKHD.

This sequence belongs to the polyribonucleotide nucleotidyltransferase family. It depends on Mg(2+) as a cofactor.

The protein localises to the cytoplasm. It catalyses the reaction RNA(n+1) + phosphate = RNA(n) + a ribonucleoside 5'-diphosphate. Its function is as follows. Involved in mRNA degradation. Catalyzes the phosphorolysis of single-stranded polyribonucleotides processively in the 3'- to 5'-direction. The sequence is that of Polyribonucleotide nucleotidyltransferase from Streptococcus pyogenes serotype M49 (strain NZ131).